A 423-amino-acid chain; its full sequence is UDP-N-acetylglucosamine 1-carboxyvinyltransferase (423 aa).

22–23 lines the phosphoenolpyruvate pocket; sequence KN. Arg98 contacts UDP-N-acetyl-alpha-D-glucosamine. Cys122 serves as the catalytic Proton donor. Cys122 carries the 2-(S-cysteinyl)pyruvic acid O-phosphothioketal modification. Residues 127–131, Asp311, and Ile333 each bind UDP-N-acetyl-alpha-D-glucosamine; that span reads RPVDQ.

It belongs to the EPSP synthase family. MurA subfamily.

It localises to the cytoplasm. The enzyme catalyses phosphoenolpyruvate + UDP-N-acetyl-alpha-D-glucosamine = UDP-N-acetyl-3-O-(1-carboxyvinyl)-alpha-D-glucosamine + phosphate. The protein operates within cell wall biogenesis; peptidoglycan biosynthesis. In terms of biological role, cell wall formation. Adds enolpyruvyl to UDP-N-acetylglucosamine. The chain is UDP-N-acetylglucosamine 1-carboxyvinyltransferase from Stenotrophomonas maltophilia (strain K279a).